The chain runs to 436 residues: Protein GOLM2 (436 aa).

Residue methionine 1 is modified to N-acetylmethionine. The Cytoplasmic portion of the chain corresponds to 1-14; sequence MVGFGANRRAGRLP. A helical; Signal-anchor for type II membrane protein transmembrane segment spans residues 15–35; it reads SLVLVVLLVVIVVLAFNYWSI. The stretch at 35–198 forms a coiled coil; it reads ISSRHVLLQE…EEQKQETQKI (164 aa). Residues 36–436 lie on the Lumenal side of the membrane; it reads SSRHVLLQEE…YGKQHFNDVL (401 aa). Over residues 225–247 the composition is skewed to basic and acidic residues; it reads ADKNEEPSSNHIPHGKEQIKRGG. Residues 225–436 form a disordered region; the sequence is ADKNEEPSSN…YGKQHFNDVL (212 aa). Phosphoserine is present on residues serine 233 and serine 275. Residues 305–321 are compositionally biased toward polar residues; it reads NHNGNPGTSKQNPSSPL. Serine 328 and serine 332 each carry phosphoserine. The segment covering 344-362 has biased composition (basic and acidic residues); it reads ATKDRVSDFHKLKQSRFFD. Phosphoserine is present on serine 366. Positions 399–418 are enriched in acidic residues; sequence YNEEEDGDGGEEDVQDDEER. A compositionally biased stretch (basic and acidic residues) spans 426 to 436; the sequence is DYGKQHFNDVL.

The protein belongs to the GOLM family.

The protein localises to the membrane. The sequence is that of Protein GOLM2 from Homo sapiens (Human).